We begin with the raw amino-acid sequence, 232 residues long: Esterase YpfH (232 aa).

Active-site charge relay system residues include serine 111, aspartate 159, and histidine 191.

This sequence belongs to the AB hydrolase superfamily. AB hydrolase 2 family.

Functionally, displays esterase activity toward palmitoyl-CoA and pNP-butyrate. The sequence is that of Esterase YpfH (ypfH) from Escherichia coli (strain K12).